The sequence spans 481 residues: MEESDTTKYVIHAHISAEGVVERPDVVGAVFGQTEGLLGADLDLRELQKTGRIGRIEVNITSKYGKSNGNILIPSSLDKVETSILAAALETIDRVGPCISKITVTKIEDVRSSKRKQIIDRAKHILTDMFDNSVPESQEITDAVKAAVRVEEVTFIDNLPAGPNVLDSDAILVVEGRADVLNLLKYGIKNAIAVEGTNVPQLVAELSKKKTVTVFTDGDRGGELILKELLQVADVDYVARAPDGKGVEELTQKEVVKSLRSKVPVEQVIEVPQGRRRNKLAAQAAEKQAQAEAAQKAEAPAAAAPVQPQREYQQKEYPQRESRERSEQPRGEVPRRKSLRRTEEQQERPERPERSERAERREYRERREYREPREPREQREQAPARKEREPSEFDEMMKELSGTLSARLLDANKNVINTVAVRDLANTLKESNGDVKSVVFDGVITQRMLDIAAEKNLETLVGVKMGSVVKQPAGVKVITTE.

The Toprim domain maps to 169–243 (DAILVVEGRA…DVDYVARAPD (75 aa)). The Mg(2+) site is built by Glu-175, Asp-217, and Asp-219. The interval 275-393 (RRRNKLAAQA…ARKEREPSEF (119 aa)) is disordered. Low complexity predominate over residues 281-309 (AAQAAEKQAQAEAAQKAEAPAAAAPVQPQ). A compositionally biased stretch (basic and acidic residues) spans 312-393 (YQQKEYPQRE…ARKEREPSEF (82 aa)).

It belongs to the archaeal DnaG primase family. As to quaternary structure, forms a ternary complex with MCM helicase and DNA. Component of the archaeal exosome complex. The cofactor is Mg(2+).

The enzyme catalyses ssDNA + n NTP = ssDNA/pppN(pN)n-1 hybrid + (n-1) diphosphate.. Functionally, RNA polymerase that catalyzes the synthesis of short RNA molecules used as primers for DNA polymerase during DNA replication. Also part of the exosome, which is a complex involved in RNA degradation. Acts as a poly(A)-binding protein that enhances the interaction between heteromeric, adenine-rich transcripts and the exosome. The chain is DNA primase DnaG from Methanocella arvoryzae (strain DSM 22066 / NBRC 105507 / MRE50).